Reading from the N-terminus, the 423-residue chain is Glucose-1-phosphate adenylyltransferase (423 aa).

Residues Tyr-108, Gly-173, 188–189, and Ser-207 contribute to the alpha-D-glucose 1-phosphate site; that span reads EK.

Belongs to the bacterial/plant glucose-1-phosphate adenylyltransferase family. Homotetramer.

The catalysed reaction is alpha-D-glucose 1-phosphate + ATP + H(+) = ADP-alpha-D-glucose + diphosphate. The protein operates within glycan biosynthesis; glycogen biosynthesis. Functionally, involved in the biosynthesis of ADP-glucose, a building block required for the elongation reactions to produce glycogen. Catalyzes the reaction between ATP and alpha-D-glucose 1-phosphate (G1P) to produce pyrophosphate and ADP-Glc. This is Glucose-1-phosphate adenylyltransferase from Francisella tularensis subsp. mediasiatica (strain FSC147).